We begin with the raw amino-acid sequence, 125 residues long: Fluoride-specific ion channel FluC (125 aa).

The next 4 membrane-spanning stretches (helical) occupy residues 6–26 (VLVM…GLGI), 35–55 (FLFG…GLFA), 66–86 (LLLL…ALSI), and 100–120 (AMGY…AGYL). Residues glycine 76 and threonine 79 each contribute to the Na(+) site.

It belongs to the fluoride channel Fluc/FEX (TC 1.A.43) family.

The protein resides in the cell inner membrane. It carries out the reaction fluoride(in) = fluoride(out). Na(+) is not transported, but it plays an essential structural role and its presence is essential for fluoride channel function. In terms of biological role, fluoride-specific ion channel. Important for reducing fluoride concentration in the cell, thus reducing its toxicity. The polypeptide is Fluoride-specific ion channel FluC (Gloeobacter violaceus (strain ATCC 29082 / PCC 7421)).